Reading from the N-terminus, the 265-residue chain is Indole-3-glycerol phosphate synthase (265 aa).

The protein belongs to the TrpC family.

It carries out the reaction 1-(2-carboxyphenylamino)-1-deoxy-D-ribulose 5-phosphate + H(+) = (1S,2R)-1-C-(indol-3-yl)glycerol 3-phosphate + CO2 + H2O. The protein operates within amino-acid biosynthesis; L-tryptophan biosynthesis; L-tryptophan from chorismate: step 4/5. This is Indole-3-glycerol phosphate synthase from Hyphomonas neptunium (strain ATCC 15444).